The primary structure comprises 444 residues: ATP-dependent protease ATPase subunit HslU (444 aa).

ATP is bound by residues Ile-18 and 60–65 (GVGKTE). The segment at 141-161 (DAWGNNEEGNNDSGTRQSFRK) is disordered. Positions 147–157 (EEGNNDSGTRQ) are enriched in polar residues. ATP contacts are provided by Asp-257, Glu-322, and Arg-394.

It belongs to the ClpX chaperone family. HslU subfamily. A double ring-shaped homohexamer of HslV is capped on each side by a ring-shaped HslU homohexamer. The assembly of the HslU/HslV complex is dependent on binding of ATP.

Its subcellular location is the cytoplasm. In terms of biological role, ATPase subunit of a proteasome-like degradation complex; this subunit has chaperone activity. The binding of ATP and its subsequent hydrolysis by HslU are essential for unfolding of protein substrates subsequently hydrolyzed by HslV. HslU recognizes the N-terminal part of its protein substrates and unfolds these before they are guided to HslV for hydrolysis. This is ATP-dependent protease ATPase subunit HslU from Aliivibrio fischeri (strain ATCC 700601 / ES114) (Vibrio fischeri).